We begin with the raw amino-acid sequence, 606 residues long: Kelch-like protein 26 (606 aa).

A compositionally biased stretch (low complexity) spans 1–19 (MAESGGSSGSSQSPERPSS). Residues 1 to 20 (MAESGGSSGSSQSPERPSSL) form a disordered region. A2 bears the N-acetylalanine mark. The BTB domain maps to 54–121 (LDVVLTVNSE…AYSAEVTLDL (68 aa)). In terms of domain architecture, BACK spans 156–257 (CLHIGQMATT…QPAELVDSVQ (102 aa)). Kelch repeat units follow at residues 301–352 (SLVA…VLDN), 353–404 (FVYV…ALGG), 406–451 (LYAT…AAAG), 452–499 (RLYI…GAAG), 501–550 (IYAL…LLER), and 552–599 (IYIV…AVLL). At S430 the chain carries Phosphoserine.

In terms of biological role, may play a role in endo(sarco)plasmic reticulum (ER/SR) mitochondrial signaling. May be part of the ubiquitin-proteasome system (UPS) and affect ubiquitination and degradation of target substrates in cardiomyocytes. The sequence is that of Kelch-like protein 26 (Klhl26) from Mus musculus (Mouse).